A 158-amino-acid chain; its full sequence is Ribosomal RNA large subunit methyltransferase H (158 aa).

S-adenosyl-L-methionine contacts are provided by residues L76, G107, and 126–131; that span reads LSGLTM.

It belongs to the RNA methyltransferase RlmH family. As to quaternary structure, homodimer.

The protein localises to the cytoplasm. It carries out the reaction pseudouridine(1915) in 23S rRNA + S-adenosyl-L-methionine = N(3)-methylpseudouridine(1915) in 23S rRNA + S-adenosyl-L-homocysteine + H(+). Specifically methylates the pseudouridine at position 1915 (m3Psi1915) in 23S rRNA. The sequence is that of Ribosomal RNA large subunit methyltransferase H from Teredinibacter turnerae (strain ATCC 39867 / T7901).